Here is a 1569-residue protein sequence, read N- to C-terminus: Pentafunctional AROM polypeptide (1569 aa).

Positions 1–382 are 3-dehydroquinate synthase; it reads MAEAKKPGPE…HEPRASVVDD (382 aa). Residues 49–51, 84–87, 115–117, and D120 contribute to the NAD(+) site; these read DTN, EASK, and GGV. R131 provides a ligand contact to 7-phospho-2-dehydro-3-deoxy-D-arabino-heptonate. 140-141 is an NAD(+) binding site; it reads TT. Residues D147 and K153 each contribute to the 7-phospho-2-dehydro-3-deoxy-D-arabino-heptonate site. Position 162 (K162) interacts with NAD(+). Residue N163 participates in 7-phospho-2-dehydro-3-deoxy-D-arabino-heptonate binding. Residues 180-183 and N191 contribute to the NAD(+) site; that span reads FLET. A Zn(2+)-binding site is contributed by E195. 7-phospho-2-dehydro-3-deoxy-D-arabino-heptonate contacts are provided by residues 195 to 198 and K248; that span reads EVVK. E258 (proton acceptor; for 3-dehydroquinate synthase activity) is an active-site residue. Residues 262 to 266 and H269 each bind 7-phospho-2-dehydro-3-deoxy-D-arabino-heptonate; that span reads RNLLN. H269 serves as a coordination point for Zn(2+). H273 (proton acceptor; for 3-dehydroquinate synthase activity) is an active-site residue. Residues H285 and K354 each coordinate 7-phospho-2-dehydro-3-deoxy-D-arabino-heptonate. H285 provides a ligand contact to Zn(2+). An EPSP synthase region spans residues 395–837; the sequence is VTPGVPSNLD…WDILSQAFKV (443 aa). The active-site For EPSP synthase activity is C819. The shikimate kinase stretch occupies residues 859 to 1053; it reads ERSVFIIGMR…MEKDHSFFVS (195 aa). ATP is bound at residue 866-873; it reads GMRGAGKT. Residues 1054-1267 form a 3-dehydroquinase region; that stretch reads LTVPDVSEAA…AAPGQMSAAE (214 aa). The Proton acceptor; for 3-dehydroquinate dehydratase activity role is filled by H1170. Catalysis depends on K1198, which acts as the Schiff-base intermediate with substrate; for 3-dehydroquinate dehydratase activity. The interval 1280–1569 is shikimate dehydrogenase; that stretch reads PCNFYLFGKP…RDARSAVLGL (290 aa).

The protein in the N-terminal section; belongs to the sugar phosphate cyclases superfamily. Dehydroquinate synthase family. In the 2nd section; belongs to the EPSP synthase family. It in the 3rd section; belongs to the shikimate kinase family. This sequence in the 4th section; belongs to the type-I 3-dehydroquinase family. The protein in the C-terminal section; belongs to the shikimate dehydrogenase family. Homodimer. It depends on Zn(2+) as a cofactor.

The protein resides in the cytoplasm. The enzyme catalyses 7-phospho-2-dehydro-3-deoxy-D-arabino-heptonate = 3-dehydroquinate + phosphate. It carries out the reaction 3-dehydroquinate = 3-dehydroshikimate + H2O. The catalysed reaction is shikimate + NADP(+) = 3-dehydroshikimate + NADPH + H(+). It catalyses the reaction shikimate + ATP = 3-phosphoshikimate + ADP + H(+). The enzyme catalyses 3-phosphoshikimate + phosphoenolpyruvate = 5-O-(1-carboxyvinyl)-3-phosphoshikimate + phosphate. Its pathway is metabolic intermediate biosynthesis; chorismate biosynthesis; chorismate from D-erythrose 4-phosphate and phosphoenolpyruvate: step 2/7. It participates in metabolic intermediate biosynthesis; chorismate biosynthesis; chorismate from D-erythrose 4-phosphate and phosphoenolpyruvate: step 3/7. It functions in the pathway metabolic intermediate biosynthesis; chorismate biosynthesis; chorismate from D-erythrose 4-phosphate and phosphoenolpyruvate: step 4/7. The protein operates within metabolic intermediate biosynthesis; chorismate biosynthesis; chorismate from D-erythrose 4-phosphate and phosphoenolpyruvate: step 5/7. Its pathway is metabolic intermediate biosynthesis; chorismate biosynthesis; chorismate from D-erythrose 4-phosphate and phosphoenolpyruvate: step 6/7. The AROM polypeptide catalyzes 5 consecutive enzymatic reactions in prechorismate polyaromatic amino acid biosynthesis. This Fusarium vanettenii (strain ATCC MYA-4622 / CBS 123669 / FGSC 9596 / NRRL 45880 / 77-13-4) (Fusarium solani subsp. pisi) protein is Pentafunctional AROM polypeptide.